We begin with the raw amino-acid sequence, 219 residues long: Casein kinase II subunit beta' (219 aa).

Phosphothreonine; by autocatalysis is present on Thr-2.

The protein belongs to the casein kinase 2 subunit beta family. Tetramer of two alpha and two beta' subunits. Phosphorylated by alpha subunit.

Functionally, participates in Wnt signaling. Plays a complex role in regulating the basal catalytic activity of the alpha subunit. The chain is Casein kinase II subunit beta' (CkIIbeta2) from Drosophila melanogaster (Fruit fly).